Consider the following 148-residue polypeptide: Protein SprT-like (148 aa).

The region spanning L6–L147 is the SprT-like domain. H67 serves as a coordination point for Zn(2+). Residue E68 is part of the active site. A Zn(2+)-binding site is contributed by H71.

The protein belongs to the SprT family. It depends on Zn(2+) as a cofactor.

The protein resides in the cytoplasm. In Lactiplantibacillus plantarum (strain ATCC BAA-793 / NCIMB 8826 / WCFS1) (Lactobacillus plantarum), this protein is Protein SprT-like.